A 341-amino-acid chain; its full sequence is L-threonine 3-dehydrogenase (341 aa).

C38 lines the Zn(2+) pocket. Active-site charge relay system residues include T40 and H43. Positions 63, 64, 93, 96, 99, and 107 each coordinate Zn(2+). NAD(+) contacts are provided by residues I175, D195, R200, 262–264 (LGI), and 286–287 (IY).

The protein belongs to the zinc-containing alcohol dehydrogenase family. Homotetramer. Requires Zn(2+) as cofactor.

It is found in the cytoplasm. It catalyses the reaction L-threonine + NAD(+) = (2S)-2-amino-3-oxobutanoate + NADH + H(+). Its pathway is amino-acid degradation; L-threonine degradation via oxydo-reductase pathway; glycine from L-threonine: step 1/2. Functionally, catalyzes the NAD(+)-dependent oxidation of L-threonine to 2-amino-3-ketobutyrate. The chain is L-threonine 3-dehydrogenase from Shigella boydii serotype 4 (strain Sb227).